Reading from the N-terminus, the 378-residue chain is Erythronate-4-phosphate dehydrogenase (378 aa).

Substrate contacts are provided by serine 45 and threonine 66. Residue aspartate 146 participates in NAD(+) binding. Residue arginine 207 is part of the active site. Aspartate 231 is a binding site for NAD(+). Glutamate 236 is an active-site residue. Histidine 253 serves as the catalytic Proton donor. Glycine 256 is an NAD(+) binding site.

The protein belongs to the D-isomer specific 2-hydroxyacid dehydrogenase family. PdxB subfamily. In terms of assembly, homodimer.

The protein localises to the cytoplasm. The enzyme catalyses 4-phospho-D-erythronate + NAD(+) = (R)-3-hydroxy-2-oxo-4-phosphooxybutanoate + NADH + H(+). Its pathway is cofactor biosynthesis; pyridoxine 5'-phosphate biosynthesis; pyridoxine 5'-phosphate from D-erythrose 4-phosphate: step 2/5. Functionally, catalyzes the oxidation of erythronate-4-phosphate to 3-hydroxy-2-oxo-4-phosphonooxybutanoate. In Wigglesworthia glossinidia brevipalpis, this protein is Erythronate-4-phosphate dehydrogenase.